Reading from the N-terminus, the 90-residue chain is UPF0335 protein RPA4190 (90 aa).

It belongs to the UPF0335 family.

The chain is UPF0335 protein RPA4190 from Rhodopseudomonas palustris (strain ATCC BAA-98 / CGA009).